The primary structure comprises 740 residues: Elongation factor 2 (740 aa).

The tr-type G domain occupies 18-263; the sequence is EQVRNIGIIA…MVVRWVPNPR (246 aa). Residues 27–34, 93–97, and 147–150 each bind GTP; these read AHVDHGKT, DTPGH, and NKVD. His606 carries the post-translational modification Diphthamide.

The protein belongs to the TRAFAC class translation factor GTPase superfamily. Classic translation factor GTPase family. EF-G/EF-2 subfamily.

The protein localises to the cytoplasm. Its function is as follows. Catalyzes the GTP-dependent ribosomal translocation step during translation elongation. During this step, the ribosome changes from the pre-translocational (PRE) to the post-translocational (POST) state as the newly formed A-site-bound peptidyl-tRNA and P-site-bound deacylated tRNA move to the P and E sites, respectively. Catalyzes the coordinated movement of the two tRNA molecules, the mRNA and conformational changes in the ribosome. The polypeptide is Elongation factor 2 (Ignicoccus hospitalis (strain KIN4/I / DSM 18386 / JCM 14125)).